The sequence spans 30 residues: Cyclotide hyen-F (30 aa).

The cyclopeptide (Gly-Asn) cross-link spans 1 to 30; the sequence is GLPCGESCVYIPCISTVLGCSCSNKVCYRN. 3 disulfide bridges follow: cysteine 4–cysteine 20, cysteine 8–cysteine 22, and cysteine 13–cysteine 27.

In terms of processing, this is a cyclic peptide. In terms of tissue distribution, detected in seeds (at protein level).

Functionally, probably participates in a plant defense mechanism. This is Cyclotide hyen-F from Pigea enneasperma (Spade flower).